Reading from the N-terminus, the 693-residue chain is Follicle-stimulating hormone receptor (693 aa).

An N-terminal signal peptide occupies residues 1 to 18 (MFLVFTCSLILLASCSSC). 2 disulfides stabilise this stretch: Cys-18-Cys-25 and Cys-23-Cys-32. Residues 19–46 (QHHTCHCAGRIFICQESKVVQLPRDIPT) enclose the LRRNT domain. Over 19–366 (QHHTCHCAGR…EDIMGYTILR (348 aa)) the chain is Extracellular. Residue Asn-47 is glycosylated (N-linked (GlcNAc...) asparagine). 9 LRR repeats span residues 49-72 (TELRFVLTKMRVIPKGAFAGLLDL), 73-97 (EKIEISQNDALEVIEAKVFSNLPKL), 98-118 (HEIRIEKANNLVYIDQDAFQH), 119-143 (LPSLRYLLISNTGLRFLPVVQKVHS), 144-169 (FQKVLLDIQDNINIRTIERNSFMGLS), 170-192 (SESVILWLNKNGIQEIENHAFNG), 193-216 (TYLDELNLSDNQNLEKLPNEVFQG), 217-240 (ANGPVVLDISRTKISFLPGHGLEL), and 241-259 (IKKLRARSTYNLKKLPDLS). 2 N-linked (GlcNAc...) asparagine glycosylation sites follow: Asn-191 and Asn-199. N-linked (GlcNAc...) asparagine glycosylation is present at Asn-268. Cystine bridges form between Cys-275-Cys-346, Cys-276-Cys-292, Cys-276-Cys-356, and Cys-292-Cys-338. A helical membrane pass occupies residues 367 to 387 (VLIWFISILAITGNIVVLIIL). Topologically, residues 388 to 398 (ISSQYKLTVPR) are cytoplasmic. The chain crosses the membrane as a helical span at residues 399-421 (FLMCNLAFADLCIGIYLLFIASV). Residues 422 to 443 (DIQTKSQYYNYAIDWQTGAGCN) are Extracellular-facing. Residues Cys-442 and Cys-517 are joined by a disulfide bond. Residues 444–465 (AAGFFTVFASELSVYTLTVITL) traverse the membrane as a helical segment. Topologically, residues 466 to 485 (ERWHTITYAMQLDRKVRFRH) are cytoplasmic. A helical membrane pass occupies residues 486 to 508 (AVIIMIFGWMFAFTVALLPIFGV). Residues 509-528 (SSYMKVSICLPMDIETPFSQ) lie on the Extracellular side of the membrane. The helical transmembrane segment at 529 to 550 (AYVIFLLVLNVLAFVIICACYI) threads the bilayer. Residues 551–573 (CIYFTVRNPNVISSNSDTKIAKR) lie on the Cytoplasmic side of the membrane. A helical transmembrane segment spans residues 574-597 (MAILIFTDFLCMAPISFFAISASL). Topologically, residues 598-608 (KVPLITVSKSK) are extracellular. A helical membrane pass occupies residues 609 to 630 (ILLVLFYPINSCANPFLYAIFT). The Cytoplasmic segment spans residues 631–693 (KTFRRDFFIL…YSLVPLNHLN (63 aa)).

The protein belongs to the G-protein coupled receptor 1 family. FSH/LSH/TSH subfamily. Homotrimer. Functions as a homotrimer binding the FSH hormone heterodimer composed of CGA and FSHB.

Its subcellular location is the cell membrane. G protein-coupled receptor for follitropin, the follicle-stimulating hormone. Through cAMP production activates the downstream PI3K-AKT and ERK1/ERK2 signaling pathways. This Cairina moschata (Muscovy duck) protein is Follicle-stimulating hormone receptor (FSHR).